Consider the following 327-residue polypeptide: GrpE protein homolog 2, mitochondrial (327 aa).

Residues 1–39 (MLVLRILSRVTRNAGIRSSLSAVTLPARNQTPVFSSRFH) constitute a mitochondrion transit peptide. Residues 68 to 140 (SSSTSPESDE…DSESDDDELS (73 aa)) are disordered. Composition is skewed to basic and acidic residues over residues 75-93 (SDEK…EKPT) and 103-113 (SESKDSVTDSA). The segment covering 130–140 (SDSESDDDELS) has biased composition (acidic residues).

Belongs to the GrpE family. Probable component of the PAM complex, at least composed of SSC1 (mtHsp70), MGE1, TIM44, PAM16/TIM16, PAM17 and PAM18/TIM14. Interacts with SSQ1.

Its subcellular location is the mitochondrion matrix. Functionally, essential component of the PAM complex, a complex required for the translocation of transit peptide-containing proteins from the inner membrane into the mitochondrial matrix in an ATP-dependent manner. Seems to control the nucleotide-dependent binding of mitochondrial HSP70 to substrate proteins. Binds ATP. Interacts with copper ions Cu(2+). Confers thermotolerance to long-term exposure at moderately high temperature (TMHT at 35 degrees Celsius). This is GrpE protein homolog 2, mitochondrial from Arabidopsis thaliana (Mouse-ear cress).